A 156-amino-acid chain; its full sequence is SsrA-binding protein (156 aa).

The interval 135 to 156 is disordered; it reads HALRERQDRREADRAMSERKDR.

It belongs to the SmpB family.

It localises to the cytoplasm. Its function is as follows. Required for rescue of stalled ribosomes mediated by trans-translation. Binds to transfer-messenger RNA (tmRNA), required for stable association of tmRNA with ribosomes. tmRNA and SmpB together mimic tRNA shape, replacing the anticodon stem-loop with SmpB. tmRNA is encoded by the ssrA gene; the 2 termini fold to resemble tRNA(Ala) and it encodes a 'tag peptide', a short internal open reading frame. During trans-translation Ala-aminoacylated tmRNA acts like a tRNA, entering the A-site of stalled ribosomes, displacing the stalled mRNA. The ribosome then switches to translate the ORF on the tmRNA; the nascent peptide is terminated with the 'tag peptide' encoded by the tmRNA and targeted for degradation. The ribosome is freed to recommence translation, which seems to be the essential function of trans-translation. The chain is SsrA-binding protein from Kineococcus radiotolerans (strain ATCC BAA-149 / DSM 14245 / SRS30216).